Here is a 208-residue protein sequence, read N- to C-terminus: Coiled-coil domain-containing protein 25 (208 aa).

Over methionine 1–aspartate 105 the chain is Extracellular. A DNA-binding region spans residues lysine 21–glutamate 25. Lysine 23 carries the post-translational modification N6-acetyllysine. Residues valine 106–valine 122 traverse the membrane as a helical segment. Residues valine 117–serine 187 are a coiled coil. The Cytoplasmic segment spans residues glutamate 123–methionine 208. The segment covering glutamate 145–arginine 184 has biased composition (basic and acidic residues). Residues glutamate 145–methionine 208 are disordered. The residue at position 204 (serine 204) is a Phosphoserine.

The protein belongs to the CCDC25 family. In terms of assembly, interacts (via cytoplasmic region) with ILK.

Its subcellular location is the cell membrane. The protein resides in the endomembrane system. Its function is as follows. Transmembrane receptor that senses neutrophil extracellular traps (NETs) and triggers the ILK-PARVB pathway to enhance cell motility. NETs are mainly composed of DNA fibers and are released by neutrophils to bind pathogens during inflammation. Formation of NETs is also associated with cancer metastasis, NET-DNA acting as a chemotactic factor to attract cancer cells. Specifically binds NETs on its extracellular region, in particular the 8-OHdG-enriched DNA present in NETs, and recruits ILK, initiating the ILK-PARVB cascade to induce cytoskeleton rearrangement and directional migration of cells. The sequence is that of Coiled-coil domain-containing protein 25 from Bos taurus (Bovine).